The following is a 141-amino-acid chain: Galactose-6-phosphate isomerase subunit LacA (141 aa).

This sequence belongs to the LacAB/RpiB family. As to quaternary structure, heteromultimeric protein consisting of LacA and LacB.

It catalyses the reaction aldehydo-D-galactose 6-phosphate = keto-D-tagatose 6-phosphate. It participates in carbohydrate metabolism; D-galactose 6-phosphate degradation; D-tagatose 6-phosphate from D-galactose 6-phosphate: step 1/1. This is Galactose-6-phosphate isomerase subunit LacA from Streptococcus equi subsp. zooepidemicus (strain MGCS10565).